A 395-amino-acid polypeptide reads, in one-letter code: Glutamyl-tRNA reductase (395 aa).

Substrate is bound by residues 45-48 (TCNR), serine 87, 92-94 (EDQ), and glutamine 98. Residue cysteine 46 is the Nucleophile of the active site. 167–172 (GAGEMG) provides a ligand contact to NADP(+).

Belongs to the glutamyl-tRNA reductase family. As to quaternary structure, homodimer.

It catalyses the reaction (S)-4-amino-5-oxopentanoate + tRNA(Glu) + NADP(+) = L-glutamyl-tRNA(Glu) + NADPH + H(+). It functions in the pathway porphyrin-containing compound metabolism; protoporphyrin-IX biosynthesis; 5-aminolevulinate from L-glutamyl-tRNA(Glu): step 1/2. Catalyzes the NADPH-dependent reduction of glutamyl-tRNA(Glu) to glutamate 1-semialdehyde (GSA). The sequence is that of Glutamyl-tRNA reductase from Methanosphaera stadtmanae (strain ATCC 43021 / DSM 3091 / JCM 11832 / MCB-3).